The chain runs to 132 residues: MDKVKVEAPVRATEDPEKVGEAVLNVFPELEIEVEDDAVRGTGDSGSLRNLQEVLEKRRIRLTARNILKKHLRDNSTWFYINKQAALMNRVNVLEESISALGDILVEIESDDIMGLIDWLAPDVSVPEDVAD.

Belongs to the UPF0201 family.

This chain is UPF0201 protein MTH_433, found in Methanothermobacter thermautotrophicus (strain ATCC 29096 / DSM 1053 / JCM 10044 / NBRC 100330 / Delta H) (Methanobacterium thermoautotrophicum).